The sequence spans 442 residues: Histidine--tRNA ligase (442 aa).

This sequence belongs to the class-II aminoacyl-tRNA synthetase family. In terms of assembly, homodimer.

The protein resides in the cytoplasm. The enzyme catalyses tRNA(His) + L-histidine + ATP = L-histidyl-tRNA(His) + AMP + diphosphate + H(+). The sequence is that of Histidine--tRNA ligase from Helicobacter hepaticus (strain ATCC 51449 / 3B1).